We begin with the raw amino-acid sequence, 341 residues long: Holliday junction branch migration complex subunit RuvB (341 aa).

The interval 1 to 182 is large ATPase domain (RuvB-L); that stretch reads MTSSDPTLRP…FGIPTRLQFY (182 aa). Residues Leu21, Arg22, Gly63, Lys66, Thr67, Thr68, 129–131, Arg172, Tyr182, and Arg219 contribute to the ATP site; that span reads EDF. Thr67 contributes to the Mg(2+) binding site. A small ATPAse domain (RuvB-S) region spans residues 183–253; the sequence is TEDELDLIVA…IADRALTRLG (71 aa). Positions 256 to 341 are head domain (RuvB-H); sequence HLGLDLGDRR…KGPGQSDLFG (86 aa). DNA contacts are provided by Arg292, Arg311, and Arg316.

It belongs to the RuvB family. In terms of assembly, homohexamer. Forms an RuvA(8)-RuvB(12)-Holliday junction (HJ) complex. HJ DNA is sandwiched between 2 RuvA tetramers; dsDNA enters through RuvA and exits via RuvB. An RuvB hexamer assembles on each DNA strand where it exits the tetramer. Each RuvB hexamer is contacted by two RuvA subunits (via domain III) on 2 adjacent RuvB subunits; this complex drives branch migration. In the full resolvosome a probable DNA-RuvA(4)-RuvB(12)-RuvC(2) complex forms which resolves the HJ.

Its subcellular location is the cytoplasm. The catalysed reaction is ATP + H2O = ADP + phosphate + H(+). Its function is as follows. The RuvA-RuvB-RuvC complex processes Holliday junction (HJ) DNA during genetic recombination and DNA repair, while the RuvA-RuvB complex plays an important role in the rescue of blocked DNA replication forks via replication fork reversal (RFR). RuvA specifically binds to HJ cruciform DNA, conferring on it an open structure. The RuvB hexamer acts as an ATP-dependent pump, pulling dsDNA into and through the RuvAB complex. RuvB forms 2 homohexamers on either side of HJ DNA bound by 1 or 2 RuvA tetramers; 4 subunits per hexamer contact DNA at a time. Coordinated motions by a converter formed by DNA-disengaged RuvB subunits stimulates ATP hydrolysis and nucleotide exchange. Immobilization of the converter enables RuvB to convert the ATP-contained energy into a lever motion, pulling 2 nucleotides of DNA out of the RuvA tetramer per ATP hydrolyzed, thus driving DNA branch migration. The RuvB motors rotate together with the DNA substrate, which together with the progressing nucleotide cycle form the mechanistic basis for DNA recombination by continuous HJ branch migration. Branch migration allows RuvC to scan DNA until it finds its consensus sequence, where it cleaves and resolves cruciform DNA. This is Holliday junction branch migration complex subunit RuvB from Cereibacter sphaeroides (strain ATCC 17029 / ATH 2.4.9) (Rhodobacter sphaeroides).